Consider the following 483-residue polypeptide: MLPTSVSRSLYLKTFRSHLLRAPQIVLKRMSSSIDISKINSWNKEFQSDLTHQLATTVLKNYNADDALLNKTRLQKQDNRVFNTVVSTDSTPVTNQKSSGRCWLFAATNQLRLNVLSELNLKEFELSQAYLFFYDKLEKANYFLDQIVSSADQDIDSRLVQYLLAAPTEDGGQYSMFLNLVKKYGLIPKDLYGDLPYSTTASRKWNSLLTTKLREFAETLRTALKERSADDSIIVTLREQMQREIFRLMSLFMDIPPVQPNEQFTWEYVDKDKKIHTIKSTPLEFASKYAKLDPSTPVSLINDPRHPYGKLIKIDRLGNVLGGDAVIYLNVDNETLSKLVVKRLQNNKAVFFGSHTPKFMDKTTGVMDIELWNYPAIGYNLRQQKASRIRYHESLMTHAMLITGCHVDETSKLPLRYRVENSWGKDSGKDGLYVMTQKYFEEYCFQIVVDINELPKELASKFTSGKEEPIVLPIWDPMGALAK.

The transit peptide at 1–30 directs the protein to the mitochondrion; that stretch reads MLPTSVSRSLYLKTFRSHLLRAPQIVLKRM. Active-site residues include Cys102, His398, and Asn421. Residue Lys483 is a propeptide, removed in mature form; by autocatalysis.

It belongs to the peptidase C1 family. Homohexamer. Binds to nucleic acids. Binds single-stranded DNA and RNA with higher affinity than double-stranded DNA. The N-terminus of isoform Cytoplasmic is blocked.

It localises to the mitochondrion. It is found in the cytoplasm. The enzyme catalyses Inactivates bleomycin B2 (a cytotoxic glycometallopeptide) by hydrolysis of a carboxyamide bond of beta-aminoalanine, but also shows general aminopeptidase activity. The specificity varies somewhat with source, but amino acid arylamides of Met, Leu and Ala are preferred.. Inhibited by E64, a specific inhibitor of cysteine proteases, N-ethylmaleimide, iodacetamide, and mercury and zinc ions. Its function is as follows. The normal physiological role of the enzyme is unknown, but it is not essential for the viability of yeast cells. Has aminopeptidase activity, shortening substrate peptides sequentially by 1 amino acid. Has bleomycin hydrolase activity, which can protect the cell from the toxic effects of bleomycin. Has homocysteine-thiolactonase activity, protecting the cell against homocysteine toxicity. Acts as a repressor in the GAL4 regulatory system, but this does not require either the peptidase or nucleic acid-binding activities. This is Cysteine proteinase 1, mitochondrial (LAP3) from Saccharomyces cerevisiae (strain JAY291) (Baker's yeast).